The following is a 405-amino-acid chain: uncharacterized protein (405 aa).

Over 1–18 (MPEPVAEPALNGLRLNLR) the chain is Cytoplasmic. Residues 19-39 (IVSIVMFNFASYLTIGLPLAV) form a helical membrane-spanning segment. At 40–46 (LPGYVHD) the chain is on the periplasmic side. The helical transmembrane segment at 47–67 (VMGFSAFWAGLVISLQYFATL) threads the bilayer. Residues 68-84 (LSRPHAGRYADSLGPKK) are Cytoplasmic-facing. A helical membrane pass occupies residues 85-105 (IVVFGLCGCFLSGLGYLTAGL). Residue T106 is a topological domain, periplasmic. The chain crosses the membrane as a helical span at residues 107–127 (ASLPVISLLLLCLGRVILGIG). The Cytoplasmic segment spans residues 128-155 (QSFAGTGSTLWGVGVVGSLHIGRVISWN). Residues 156–176 (GIVTYGAMAMGAPLGVVFYHW) form a helical membrane-spanning segment. Position 177 (G177) is a topological domain, periplasmic. A helical transmembrane segment spans residues 178-198 (GLQALALIIMGVALVAILLAI). Residues 199-223 (PRPTVKASKGKPLPFRAVLGRVWLY) are Cytoplasmic-facing. Residues 224 to 244 (GMALALASAGFGVIATFITLF) form a helical membrane-spanning segment. At 245 to 251 (YDAKGWD) the chain is on the periplasmic side. Residues 252–272 (GAAFALTLFSCAFVGTRLLFP) traverse the membrane as a helical segment. At 273–282 (NGINRIGGLN) the chain is on the cytoplasmic side. The chain crosses the membrane as a helical span at residues 283–303 (VAMICFSVEIIGLLLVGVATM). Residues 304 to 308 (PWMAK) lie on the Periplasmic side of the membrane. The helical transmembrane segment at 309 to 329 (IGVLLAGAGFSLVFPALGVVA) threads the bilayer. The Cytoplasmic segment spans residues 330–343 (VKAVPQQNQGAALA). The helical transmembrane segment at 344-364 (TYTVFMDLSLGVTGPLAGLVM) threads the bilayer. A topological domain (periplasmic) is located at residue S365. The chain crosses the membrane as a helical span at residues 366–386 (WAGVPVIYLAAAGLVAIALLL). Topologically, residues 387–405 (TWRLKKRPPEHVPEAASSS) are cytoplasmic.

It belongs to the major facilitator superfamily. YhhS family.

It localises to the cell inner membrane. Functionally, confers high-level resistance to glyphosate when overexpressed. Overexpression has no effect on intracellular arabinose concentrations. This is an uncharacterized protein from Escherichia coli (strain K12).